The following is a 244-amino-acid chain: Chalcone--flavanone isomerase (244 aa).

Substrate contacts are provided by Thr57, Asn122, and Ser199.

Belongs to the chalcone isomerase family.

The catalysed reaction is a chalcone = a flavanone.. It participates in secondary metabolite biosynthesis; flavonoid biosynthesis. Catalyzes the intramolecular cyclization of bicyclic chalcones into tricyclic (S)-flavanones. Responsible for the isomerization of 4,2',4',6'-tetrahydroxychalcone (also termed chalcone) into naringenin. The sequence is that of Chalcone--flavanone isomerase (CHI) from Arabidopsis lyrata subsp. petraea (Northern rock-cress).